The sequence spans 1868 residues: Inactive histone-lysine N-methyltransferase 2E (1868 aa).

The short motif at Asp-63–Tyr-66 is the HCFC1-binding motif (HBM) element. The PHD-type zinc-finger motif lies at Val-118–Arg-166. Cys-121, Cys-123, Cys-135, Cys-138, His-143, Cys-146, Cys-160, and Cys-163 together coordinate Zn(2+). Disordered regions lie at residues Arg-178–Glu-197, Ala-217–Ser-268, and Gly-308–Arg-329. The SET domain maps to Pro-330 to Asp-447. The O-linked (GlcNAc) serine glycan is linked to Ser-435. Thr-440 carries an O-linked (GlcNAc) threonine glycan. The segment at Lys-472–Ile-504 is disordered. The span at Lys-494–Ile-504 shows a compositional bias: basic and acidic residues. Positions Val-559 to Lys-613 form a coiled coil. Positions Asn-646 to Thr-670 are enriched in basic residues. The tract at residues Asn-646–Pro-682 is disordered. A phosphoserine mark is found at Ser-837 and Ser-845. Residues Tyr-884–Pro-908 show a composition bias toward low complexity. 2 disordered regions span residues Tyr-884–Arg-924 and Ser-1038–Val-1068. The segment covering Pro-1049–Val-1068 has biased composition (polar residues). Phosphoserine is present on Ser-1070. 4 disordered regions span residues Lys-1165–Ala-1222, Ser-1236–Ile-1315, Pro-1334–Gln-1565, and Val-1585–Pro-1842. The segment covering Ser-1184 to Gly-1197 has biased composition (low complexity). A compositionally biased stretch (polar residues) spans Ser-1203–Gln-1213. At Ser-1282 the chain carries Phosphoserine. Positions Ser-1282–Gly-1291 are enriched in basic and acidic residues. 2 stretches are compositionally biased toward low complexity: residues Ser-1294–Ser-1312 and Pro-1348–Gly-1363. Phosphoserine is present on Ser-1364. Composition is skewed to polar residues over residues Ala-1389 to Ala-1421, His-1451 to Thr-1463, and Ser-1488 to Arg-1498. The segment covering Ala-1506–Ala-1518 has biased composition (low complexity). A compositionally biased stretch (polar residues) spans Thr-1519–Thr-1547. The span at Ala-1548 to Ser-1558 shows a compositional bias: pro residues. The span at Val-1585 to Val-1603 shows a compositional bias: polar residues. The segment covering Val-1631–Gly-1642 has biased composition (pro residues). The segment covering Gln-1647–Ser-1656 has biased composition (polar residues). Positions Leu-1682–Ala-1692 are enriched in pro residues. Residues Gln-1706 to Val-1716 are compositionally biased toward polar residues. A compositionally biased stretch (pro residues) spans Ala-1719 to Ala-1732. Residues Gln-1806–Ala-1816 are compositionally biased toward polar residues.

The protein belongs to the class V-like SAM-binding methyltransferase superfamily. Histone-lysine methyltransferase family. TRX/MLL subfamily. In terms of assembly, component of a complex composed of KMT2E, OGT and USP7; the complex stabilizes KMT2E, preventing KMT2E ubiquitination and proteasomal-mediated degradation. Interacts (via N-terminus) with OGT (via TRP repeats). Interacts with deubiquitinating enzyme USP7 (via MATH domain). Interacts (via HBM motif) with HCFC1 (via Kelch domain). Interacts with E2F1; the interaction is probably indirect and is mediated via HCFC1. In terms of processing, ubiquitinated. Deubiquitinated by USP7. O-glycosylated at Ser-435 and Thr-440 in the SET domain by OGT which probably prevents KMT2E proteasomal-mediated degradation.

Its subcellular location is the chromosome. The protein localises to the cytoplasm. It is found in the cytoskeleton. The protein resides in the microtubule organizing center. It localises to the centrosome. Its subcellular location is the nucleus speckle. Associates with chromatin regions downstream of transcriptional start sites of active genes and thus regulates gene transcription. Chromatin interaction is mediated via the binding to tri-methylated histone H3 at 'Lys-4' (H3K4me3). Key regulator of hematopoiesis involved in terminal myeloid differentiation and in the regulation of hematopoietic stem cell (HSCs) self-renewal by a mechanism that involves DNA methylation. Also acts as an important cell cycle regulator, participating in cell cycle regulatory network machinery at multiple cell cycle stages including G1/S transition, S phase progression and mitotic entry. Recruited to E2F1 responsive promoters by HCFC1 where it stimulates tri-methylation of histone H3 at 'Lys-4' and transcriptional activation and thereby facilitates G1 to S phase transition. During myoblast differentiation, required to suppress inappropriate expression of S-phase-promoting genes and maintain expression of determination genes in quiescent cells. This is Inactive histone-lysine N-methyltransferase 2E (Kmt2e) from Mus musculus (Mouse).